The primary structure comprises 500 residues: Probable 26S proteasome non-ATPase regulatory subunit 3 (500 aa).

In terms of domain architecture, PCI spans 253-432; that stretch reads ARFLYYLGRI…GYMRTKESTD (180 aa). The disordered stretch occupies residues 462-484; that stretch reads RYPPKSYGKELESAEERREREQQ. Residues 468–484 are compositionally biased toward basic and acidic residues; sequence YGKELESAEERREREQQ.

It belongs to the proteasome subunit S3 family. The 26S proteasome is composed of a core protease, known as the 20S proteasome, capped at one or both ends by the 19S regulatory complex (RC). The RC is composed of at least 18 different subunits in two subcomplexes, the base and the lid, which form the portions proximal and distal to the 20S proteolytic core, respectively.

Its function is as follows. Acts as a regulatory subunit of the 26 proteasome which is involved in the ATP-dependent degradation of ubiquitinated proteins. The sequence is that of Probable 26S proteasome non-ATPase regulatory subunit 3 (DOXA2) from Anopheles stephensi (Indo-Pakistan malaria mosquito).